The sequence spans 269 residues: MKI67 FHA domain-interacting nucleolar phosphoprotein (269 aa).

In terms of domain architecture, RRM spans 45–123; the sequence is GVLYVGHLPR…RIIKCHVIPP (79 aa). Residues 234-269 are disordered; that stretch reads DEIVIKVKPLPENSDDVEESEEESAEEDEGEEEEAA. Over residues 246 to 269 the composition is skewed to acidic residues; that stretch reads NSDDVEESEEESAEEDEGEEEEAA.

The protein resides in the nucleus. It localises to the nucleolus. Its function is as follows. Plays an essential role in early embryonic development. This is MKI67 FHA domain-interacting nucleolar phosphoprotein (nifk) from Danio rerio (Zebrafish).